A 308-amino-acid chain; its full sequence is tRNA dimethylallyltransferase (308 aa).

Glycine 9–threonine 16 lines the ATP pocket. Residue threonine 11–threonine 16 participates in substrate binding. 2 interaction with substrate tRNA regions span residues aspartate 34 to glutamine 37 and glutamine 158 to arginine 162.

This sequence belongs to the IPP transferase family. In terms of assembly, monomer. Mg(2+) is required as a cofactor.

The catalysed reaction is adenosine(37) in tRNA + dimethylallyl diphosphate = N(6)-dimethylallyladenosine(37) in tRNA + diphosphate. Its function is as follows. Catalyzes the transfer of a dimethylallyl group onto the adenine at position 37 in tRNAs that read codons beginning with uridine, leading to the formation of N6-(dimethylallyl)adenosine (i(6)A). The sequence is that of tRNA dimethylallyltransferase from Maricaulis maris (strain MCS10) (Caulobacter maris).